The following is a 64-amino-acid chain: Translation machinery-associated protein 7 homolog (64 aa).

Residues 1 to 64 are disordered; sequence MSGRQGGKAK…GGGIKKSGKK (64 aa). A coiled-coil region spans residues 21–50; that stretch reads DLSEEDVEFKKKQQEEAKKIKEMAAKAGQR. Over residues 28–44 the composition is skewed to basic and acidic residues; that stretch reads EFKKKQQEEAKKIKEMA. The segment covering 53-64 has biased composition (gly residues); the sequence is LLGGGIKKSGKK.

It belongs to the TMA7 family.

The polypeptide is Translation machinery-associated protein 7 homolog (Caenorhabditis elegans).